Consider the following 453-residue polypeptide: MKFSAVILAAGKGTRMYSNMPKVLHTLAGKPMVKHVIDTCTGLGAQNIHLVYGHGGDQMQAALAEEPVNWVLQAEQLGTGHAVDQASPQFEDDEKILVLYGDVPLISSETIESLLDAQPKGGIALLTVVLDNPTGYGRIVRKNGPVVAIVEQKDANEEQKLIKEINTGVMVATGGDLKRWLAGLNNDNAQGEYYLTDVIAAAHDEGNAVEAVHPVSPIEVEGVNDRAQLARLERAFQAAQAKKLLEQGVMLRDPARFDLRGELQCGLDVEIDVNVIIEGNVSLGDNVVIGAGCVLKDCEIDDNTIVRPYSVIEGATVGEQCTVGPFTRLRPGAEMRNDSHVGNFVEVKNACIGEGSKANHLTYLGDAEIGQRTNIGAGTITCNYDGANKFKTIIGNDVFVGSDSQLVAPVTIADGATIGAGTTLTKDVAEGELVITRAKERKITGWQRPVKKK.

The interval 1–226 is pyrophosphorylase; sequence MKFSAVILAA…PIEVEGVNDR (226 aa). Residues 8–11, lysine 22, glutamine 73, 78–79, 100–102, glycine 137, glutamate 151, asparagine 166, and asparagine 224 contribute to the UDP-N-acetyl-alpha-D-glucosamine site; these read LAAG, GT, and YGD. Mg(2+) is bound at residue aspartate 102. Residue asparagine 224 participates in Mg(2+) binding. The interval 227-247 is linker; sequence AQLARLERAFQAAQAKKLLEQ. Positions 248-453 are N-acetyltransferase; sequence GVMLRDPARF…TGWQRPVKKK (206 aa). Residues arginine 330 and lysine 348 each contribute to the UDP-N-acetyl-alpha-D-glucosamine site. Histidine 360 serves as the catalytic Proton acceptor. UDP-N-acetyl-alpha-D-glucosamine contacts are provided by tyrosine 363 and asparagine 374. Acetyl-CoA contacts are provided by residues alanine 377, 383 to 384, serine 402, alanine 420, and arginine 437; that span reads NY.

It in the N-terminal section; belongs to the N-acetylglucosamine-1-phosphate uridyltransferase family. In the C-terminal section; belongs to the transferase hexapeptide repeat family. In terms of assembly, homotrimer. Mg(2+) is required as a cofactor.

It localises to the cytoplasm. It catalyses the reaction alpha-D-glucosamine 1-phosphate + acetyl-CoA = N-acetyl-alpha-D-glucosamine 1-phosphate + CoA + H(+). The enzyme catalyses N-acetyl-alpha-D-glucosamine 1-phosphate + UTP + H(+) = UDP-N-acetyl-alpha-D-glucosamine + diphosphate. Its pathway is nucleotide-sugar biosynthesis; UDP-N-acetyl-alpha-D-glucosamine biosynthesis; N-acetyl-alpha-D-glucosamine 1-phosphate from alpha-D-glucosamine 6-phosphate (route II): step 2/2. It functions in the pathway nucleotide-sugar biosynthesis; UDP-N-acetyl-alpha-D-glucosamine biosynthesis; UDP-N-acetyl-alpha-D-glucosamine from N-acetyl-alpha-D-glucosamine 1-phosphate: step 1/1. It participates in bacterial outer membrane biogenesis; LPS lipid A biosynthesis. Its function is as follows. Catalyzes the last two sequential reactions in the de novo biosynthetic pathway for UDP-N-acetylglucosamine (UDP-GlcNAc). The C-terminal domain catalyzes the transfer of acetyl group from acetyl coenzyme A to glucosamine-1-phosphate (GlcN-1-P) to produce N-acetylglucosamine-1-phosphate (GlcNAc-1-P), which is converted into UDP-GlcNAc by the transfer of uridine 5-monophosphate (from uridine 5-triphosphate), a reaction catalyzed by the N-terminal domain. The chain is Bifunctional protein GlmU from Vibrio vulnificus (strain YJ016).